The following is a 287-amino-acid chain: MSQKHIDELSGVETTGHEWDGIQELNNPMPRWWIWTFYVTILWAIGYAIAYPAIPMITSATNGYLGYSTRAELQQDLNLAKSSQTEFHDLIAAKTVEEIDADPALRKFAIAGGASAFKVNCAPCHGSGASGGPGFPNLNDDDWLWGGDLNAIQATISHGIRFDGDTDSHSSEMPPFAGVLEPIQMKQVAAFVWGLTNTPSDVGLAAAGKQVFFDNCAPCHGEDAKGKVEMGAPDLADAIWLKSRGEDAILRQVASPKHGVMPAWAARLGDTTVNELTIFVHALGGGT.

The Cytoplasmic portion of the chain corresponds to 1–33; the sequence is MSQKHIDELSGVETTGHEWDGIQELNNPMPRWW. The chain crosses the membrane as a helical span at residues 34-54; the sequence is IWTFYVTILWAIGYAIAYPAI. At 55–287 the chain is on the periplasmic side; it reads PMITSATNGY…IFVHALGGGT (233 aa). Cytochrome c domains lie at 108–196 and 203–284; these read FAIA…WGLT and GLAA…HALG. Positions 121, 124, 125, 173, 216, 219, 220, and 261 each coordinate heme c.

It belongs to the CcoP / FixP family. In terms of assembly, component of the cbb3-type cytochrome c oxidase at least composed of FixN, FixO, FixQ and FixP. The cofactor is heme c.

Its subcellular location is the cell inner membrane. The protein operates within energy metabolism; oxidative phosphorylation. In terms of biological role, C-type cytochrome. Part of the cbb3-type cytochrome c oxidase complex. FixP subunit is required for transferring electrons from donor cytochrome c via its heme groups to FixO subunit. From there, electrons are shuttled to the catalytic binuclear center of FixN subunit where oxygen reduction takes place. The complex also functions as a proton pump. This Rhizobium etli (strain ATCC 51251 / DSM 11541 / JCM 21823 / NBRC 15573 / CFN 42) protein is Cbb3-type cytochrome c oxidase subunit FixP.